The following is a 282-amino-acid chain: Pantothenate synthetase (282 aa).

An ATP-binding site is contributed by M30–H37. Catalysis depends on H37, which acts as the Proton donor. Residue Q61 coordinates (R)-pantoate. Q61 contributes to the beta-alanine binding site. Position 149–152 (G149–D152) interacts with ATP. Q155 is a binding site for (R)-pantoate. Residues L178 and M186 to R189 each bind ATP.

Belongs to the pantothenate synthetase family. As to quaternary structure, homodimer.

The protein resides in the cytoplasm. The enzyme catalyses (R)-pantoate + beta-alanine + ATP = (R)-pantothenate + AMP + diphosphate + H(+). The protein operates within cofactor biosynthesis; (R)-pantothenate biosynthesis; (R)-pantothenate from (R)-pantoate and beta-alanine: step 1/1. In terms of biological role, catalyzes the condensation of pantoate with beta-alanine in an ATP-dependent reaction via a pantoyl-adenylate intermediate. This Flavobacterium psychrophilum (strain ATCC 49511 / DSM 21280 / CIP 103535 / JIP02/86) protein is Pantothenate synthetase.